We begin with the raw amino-acid sequence, 89 residues long: uncharacterized protein (89 aa).

This is an uncharacterized protein from Klebsiella aerogenes (Enterobacter aerogenes).